Here is a 303-residue protein sequence, read N- to C-terminus: Methionyl-tRNA formyltransferase (303 aa).

111–114 (SLLP) is a (6S)-5,6,7,8-tetrahydrofolate binding site.

Belongs to the Fmt family.

It catalyses the reaction L-methionyl-tRNA(fMet) + (6R)-10-formyltetrahydrofolate = N-formyl-L-methionyl-tRNA(fMet) + (6S)-5,6,7,8-tetrahydrofolate + H(+). In terms of biological role, attaches a formyl group to the free amino group of methionyl-tRNA(fMet). The formyl group appears to play a dual role in the initiator identity of N-formylmethionyl-tRNA by promoting its recognition by IF2 and preventing the misappropriation of this tRNA by the elongation apparatus. The polypeptide is Methionyl-tRNA formyltransferase (Ehrlichia chaffeensis (strain ATCC CRL-10679 / Arkansas)).